We begin with the raw amino-acid sequence, 21 residues long: DYE-linked aldehyde dehydrogenase, gamma chain (21 aa).

As to quaternary structure, heterotetramer composed of an alpha, a beta and two gamma chains. [2Fe-2S] cluster is required as a cofactor.

Active with aldehydes and formate esters as substrates. This is DYE-linked aldehyde dehydrogenase, gamma chain from Amycolatopsis methanolica.